A 62-amino-acid chain; its full sequence is Translational regulator CsrA (62 aa).

This sequence belongs to the CsrA/RsmA family. Homodimer; the beta-strands of each monomer intercalate to form a hydrophobic core, while the alpha-helices form wings that extend away from the core.

The protein resides in the cytoplasm. Functionally, a key translational regulator that binds mRNA to regulate translation initiation and/or mRNA stability. Mediates global changes in gene expression, shifting from rapid growth to stress survival by linking envelope stress, the stringent response and the catabolite repression systems. Usually binds in the 5'-UTR; binding at or near the Shine-Dalgarno sequence prevents ribosome-binding, repressing translation, binding elsewhere in the 5'-UTR can activate translation and/or stabilize the mRNA. Its function is antagonized by small RNA(s). This Idiomarina loihiensis (strain ATCC BAA-735 / DSM 15497 / L2-TR) protein is Translational regulator CsrA.